A 452-amino-acid chain; its full sequence is tRNA modification GTPase MnmE (452 aa).

The (6S)-5-formyl-5,6,7,8-tetrahydrofolate site is built by Arg21, Glu78, and Lys118. Residues 214–375 (GMKVVIAGRP…LREHLKQSMG (162 aa)) enclose the TrmE-type G domain. Residue Asn224 participates in K(+) binding. Residues 224 to 229 (NAGKSS), 243 to 249 (TDIAGTT), 268 to 271 (DTAG), and 333 to 336 (NKAD) each bind GTP. Ser228 lines the Mg(2+) pocket. The K(+) site is built by Thr243, Ile245, and Thr248. Thr249 is a binding site for Mg(2+). Lys452 is a binding site for (6S)-5-formyl-5,6,7,8-tetrahydrofolate.

Belongs to the TRAFAC class TrmE-Era-EngA-EngB-Septin-like GTPase superfamily. TrmE GTPase family. As to quaternary structure, homodimer. Heterotetramer of two MnmE and two MnmG subunits. K(+) serves as cofactor.

The protein localises to the cytoplasm. In terms of biological role, exhibits a very high intrinsic GTPase hydrolysis rate. Involved in the addition of a carboxymethylaminomethyl (cmnm) group at the wobble position (U34) of certain tRNAs, forming tRNA-cmnm(5)s(2)U34. This chain is tRNA modification GTPase MnmE, found in Pasteurella multocida (strain Pm70).